We begin with the raw amino-acid sequence, 175 residues long: Centrosomal protein 20 (175 aa).

Positions 1–104 (MATIAELKAV…IVEDANGKSV (104 aa)) are necessary and sufficient for homooligomerization and localization to centrosomes and pericentriolar satellites. In terms of domain architecture, LisH spans 49 to 81 (ENLLINELIREYLEFNKYKYSASVLTAEAGQPE). Positions 137-166 (RQNLAKPSTERNQKDRIPEPGRMAGTSIEE) are disordered. Positions 144 to 155 (STERNQKDRIPE) are enriched in basic and acidic residues.

This sequence belongs to the CEP43 family. As to quaternary structure, homooligomer; probably required for localization to centrosomes.

The protein localises to the cell projection. Its subcellular location is the cilium. It is found in the cytoplasm. The protein resides in the cytoskeleton. It localises to the cilium basal body. The protein localises to the microtubule organizing center. Its subcellular location is the centrosome. It is found in the cytoplasmic granule. The protein resides in the centriolar satellite. Involved in the biogenesis of cilia. Required for the recruitment of PLK1 to centrosomes and S phase progression. The chain is Centrosomal protein 20 (CEP20) from Gallus gallus (Chicken).